Consider the following 302-residue polypeptide: uncharacterized protein (302 aa).

Disordered stretches follow at residues 81-100 (ETSD…ERAA), 155-209 (TVTG…PVNP), and 269-302 (LRIE…ALLN). Low complexity predominate over residues 196-209 (PSLPSSLVSSPVNP).

This is an uncharacterized protein from Ictalurid herpesvirus 1 (strain Auburn) (IcHV-1).